We begin with the raw amino-acid sequence, 127 residues long: Large ribosomal subunit protein bL12 (127 aa).

Residues Lys77 and Lys88 each carry the N6-methyllysine modification.

It belongs to the bacterial ribosomal protein bL12 family. Homodimer. Part of the ribosomal stalk of the 50S ribosomal subunit. Forms a multimeric L10(L12)X complex, where L10 forms an elongated spine to which 2 to 4 L12 dimers bind in a sequential fashion. Binds GTP-bound translation factors.

Functionally, forms part of the ribosomal stalk which helps the ribosome interact with GTP-bound translation factors. Is thus essential for accurate translation. This chain is Large ribosomal subunit protein bL12, found in Nitratidesulfovibrio vulgaris (strain DSM 19637 / Miyazaki F) (Desulfovibrio vulgaris).